A 322-amino-acid chain; its full sequence is Labrum-interacting protein from saliva LIPS-2 (322 aa).

A signal peptide spans 1-20 (MKTSLPIVVLLTAVISGVHP). Cysteine 27 and cysteine 62 form a disulfide bridge. Residues asparagine 168 and asparagine 175 are each glycosylated (N-linked (GlcNAc...) asparagine). A disulfide bridge connects residues cysteine 249 and cysteine 295.

As to quaternary structure, monomer in solution. Interacts (via the N-terminal domain) with cuticular protein Cp19 (via the C-terminus). Post-translationally, proteolytically cleaved by human mast cell tryptase and chymase. Glycosylated. Female salivary gland (at protein level). Female saliva (at protein level).

Its subcellular location is the secreted. Salivary protein that promotes mosquito blood feeding on the vertebrate host by inducing morphological changes in the mosquito labrum. Interacts with the mosquito labrum end tip and triggers salivation and probing. Modulates enzymatic activities of human tryptase and chymase. This is Labrum-interacting protein from saliva LIPS-2 from Aedes albopictus (Asian tiger mosquito).